A 494-amino-acid chain; its full sequence is MANYFNTLSLRQQLDQIGRCRFMQRSEFSEGCDFLKGKKIVIVGCGAQGLNQGLNMRDSGLDVAYALRQAAIDEKRDSFQRASGNGFTVGTYKELIPSADLVYNLTPDKQHSSVVEAIMPLMKEGASLGYSHGFNIVEEGQQIRSDITVVMCAPKCPGTEVREEYKRGFGVPTLIAVHPENDPQQQGWDIAKALASATGGDRAGVLESSFVAEVKSDLMGEQTILCGMQQAAAVLGYEKMVADGIDPAYAGALIQFGLEAITEALKIGGVTNMMDRLSNPAKIKAFDLSEQLKDMLKPLFGKHQDDIISGEFSRTMMEDWANGDANLLKWREETGQTGFENAPEYNGKIDEQEFFDNGVFIVAMIKAGVELAFDVMVEAGILPESAYYESLHETPLISNTIARKRLYEMNVVISDTAEYGNYLFANAAIPLLADKLMPSIGTELIGKPFAAASNSVDNKTLVAVNKAIREHGVESVGDTLRGYMTDMKAIVEAV.

Residues 14–208 (LDQIGRCRFM…GGDRAGVLES (195 aa)) enclose the KARI N-terminal Rossmann domain. Residues 45–48 (CGAQ), arginine 68, arginine 76, serine 78, and 108–110 (DKQ) contribute to the NADP(+) site. Histidine 132 is an active-site residue. Glycine 158 serves as a coordination point for NADP(+). 2 consecutive KARI C-terminal knotted domains span residues 209 to 344 (SFVA…NAPE) and 345 to 487 (YNGK…MTDM). Mg(2+) is bound by residues aspartate 217, glutamate 221, glutamate 389, and glutamate 393. Residue serine 414 coordinates substrate.

It belongs to the ketol-acid reductoisomerase family. Mg(2+) is required as a cofactor.

The catalysed reaction is (2R)-2,3-dihydroxy-3-methylbutanoate + NADP(+) = (2S)-2-acetolactate + NADPH + H(+). The enzyme catalyses (2R,3R)-2,3-dihydroxy-3-methylpentanoate + NADP(+) = (S)-2-ethyl-2-hydroxy-3-oxobutanoate + NADPH + H(+). It functions in the pathway amino-acid biosynthesis; L-isoleucine biosynthesis; L-isoleucine from 2-oxobutanoate: step 2/4. The protein operates within amino-acid biosynthesis; L-valine biosynthesis; L-valine from pyruvate: step 2/4. Involved in the biosynthesis of branched-chain amino acids (BCAA). Catalyzes an alkyl-migration followed by a ketol-acid reduction of (S)-2-acetolactate (S2AL) to yield (R)-2,3-dihydroxy-isovalerate. In the isomerase reaction, S2AL is rearranged via a Mg-dependent methyl migration to produce 3-hydroxy-3-methyl-2-ketobutyrate (HMKB). In the reductase reaction, this 2-ketoacid undergoes a metal-dependent reduction by NADPH to yield (R)-2,3-dihydroxy-isovalerate. The polypeptide is Ketol-acid reductoisomerase (NADP(+)) (Pseudoalteromonas atlantica (strain T6c / ATCC BAA-1087)).